A 320-amino-acid chain; its full sequence is Pyrroline-5-carboxylate reductase 2 (320 aa).

Ser-2 is modified (N-acetylserine). NADP(+) contacts are provided by residues 6–11 (IGAGQL) and Ser-34. NADPH contacts are provided by Ala-8, Gln-10, Leu-11, Ser-34, Glu-36, Asn-56, Val-70, Lys-71, and Ala-97. NADP(+) is bound by residues Asn-56, 69–72 (AVKP), and 95–97 (CAA). Glu-164 is a binding site for L-proline. Asn-230 serves as a coordination point for NADPH. The L-proline site is built by Ala-237 and Thr-238. Residues 293 to 320 (ESPTVSTLAPPSSGKLLTRNPAQGSKRE) are disordered. Ser-304 is modified (phosphoserine).

Belongs to the pyrroline-5-carboxylate reductase family. Homodecamer; composed of 5 homodimers. Interacts with LTO1.

It localises to the cytoplasm. It is found in the mitochondrion. The enzyme catalyses L-proline + NADP(+) = (S)-1-pyrroline-5-carboxylate + NADPH + 2 H(+). The catalysed reaction is L-proline + NAD(+) = (S)-1-pyrroline-5-carboxylate + NADH + 2 H(+). It participates in amino-acid biosynthesis; L-proline biosynthesis; L-proline from L-glutamate 5-semialdehyde: step 1/1. In terms of biological role, oxidoreductase that catalyzes the last step in proline biosynthesis, which corresponds to the reduction of pyrroline-5-carboxylate to L-proline using NAD(P)H. At physiologic concentrations, has higher specific activity in the presence of NADH. Involved in cellular response to oxidative stress. In some cell types, such as erythrocytes, its primary function may be the generation of NADP(+). The sequence is that of Pyrroline-5-carboxylate reductase 2 from Rattus norvegicus (Rat).